We begin with the raw amino-acid sequence, 504 residues long: uncharacterized protein (504 aa).

A helical transmembrane segment spans residues 6-26; that stretch reads NLFIIFIFLFLLSQVSAYITF.

This sequence to M.jannaschii MJ1506 and MJ1561.

It localises to the membrane. This is an uncharacterized protein from Methanocaldococcus jannaschii (strain ATCC 43067 / DSM 2661 / JAL-1 / JCM 10045 / NBRC 100440) (Methanococcus jannaschii).